The sequence spans 351 residues: 1-aminocyclopropane-1-carboxylate oxidase homolog 4 (351 aa).

The region spanning 200 to 304 (KSQYMVGQHY…AIVFSTFMRA (105 aa)) is the Fe2OG dioxygenase domain. Residues His-224, Asp-226, and His-280 each contribute to the Fe cation site. Arg-291 serves as a coordination point for 2-oxoglutarate.

Belongs to the iron/ascorbate-dependent oxidoreductase family. Fe(2+) serves as cofactor.

This Arabidopsis thaliana (Mouse-ear cress) protein is 1-aminocyclopropane-1-carboxylate oxidase homolog 4.